Here is a 203-residue protein sequence, read N- to C-terminus: Ribosome maturation factor RimP (203 aa).

The disordered stretch occupies residues 183–203; the sequence is FDDIETEGSAEGTTGSEEENK.

It belongs to the RimP family.

It localises to the cytoplasm. Functionally, required for maturation of 30S ribosomal subunits. The polypeptide is Ribosome maturation factor RimP (Ruegeria sp. (strain TM1040) (Silicibacter sp.)).